A 193-amino-acid chain; its full sequence is MAFPPIILASQSPRRKEILQLSGLSFSTVSIETPEHLDPAESIESNVRRIAEEKAKAAIQSFQNDTRDPVLLGADTVVAIDGRILGKPANAAEALEMLLQLQGRTHEVHTGFALLQSAHLYSECATTEVTLNKMTEEEILHYINTAAPFDKAGSYGIQDPVMACFVSSITGCYYNVMGLPLSRVWMALQKLRS.

Asp75 serves as the catalytic Proton acceptor.

It belongs to the Maf family. YhdE subfamily. It depends on a divalent metal cation as a cofactor.

The protein resides in the cytoplasm. It carries out the reaction dTTP + H2O = dTMP + diphosphate + H(+). It catalyses the reaction UTP + H2O = UMP + diphosphate + H(+). Its function is as follows. Nucleoside triphosphate pyrophosphatase that hydrolyzes dTTP and UTP. May have a dual role in cell division arrest and in preventing the incorporation of modified nucleotides into cellular nucleic acids. The polypeptide is dTTP/UTP pyrophosphatase (Chlorobium phaeovibrioides (strain DSM 265 / 1930) (Prosthecochloris vibrioformis (strain DSM 265))).